We begin with the raw amino-acid sequence, 127 residues long: Major sperm protein 63 (127 aa).

Ala2 carries the N-acetylalanine modification. The 118-residue stretch at 9–126 folds into the MSP domain; it reads DIQTQPGTKI…RRKNLPIEYN (118 aa).

As to expression, sperm.

It localises to the cell projection. The protein localises to the pseudopodium. The protein resides in the cytoplasm. It is found in the cytoskeleton. Its function is as follows. Central component in molecular interactions underlying sperm crawling. Forms an extensive filament system that extends from sperm villipoda, along the leading edge of the pseudopod. This chain is Major sperm protein 63 (msp-63), found in Caenorhabditis elegans.